A 177-amino-acid polypeptide reads, in one-letter code: Large ribosomal subunit protein uL6 (177 aa).

This sequence belongs to the universal ribosomal protein uL6 family. In terms of assembly, part of the 50S ribosomal subunit.

Its function is as follows. This protein binds to the 23S rRNA, and is important in its secondary structure. It is located near the subunit interface in the base of the L7/L12 stalk, and near the tRNA binding site of the peptidyltransferase center. This chain is Large ribosomal subunit protein uL6, found in Rhodopseudomonas palustris (strain BisA53).